The chain runs to 471 residues: 3-isopropylmalate dehydratase large subunit (471 aa).

[4Fe-4S] cluster contacts are provided by Cys-347, Cys-407, and Cys-410.

Belongs to the aconitase/IPM isomerase family. LeuC type 1 subfamily. As to quaternary structure, heterodimer of LeuC and LeuD. The cofactor is [4Fe-4S] cluster.

It catalyses the reaction (2R,3S)-3-isopropylmalate = (2S)-2-isopropylmalate. The protein operates within amino-acid biosynthesis; L-leucine biosynthesis; L-leucine from 3-methyl-2-oxobutanoate: step 2/4. Functionally, catalyzes the isomerization between 2-isopropylmalate and 3-isopropylmalate, via the formation of 2-isopropylmaleate. The protein is 3-isopropylmalate dehydratase large subunit of Geobacillus sp. (strain WCH70).